A 337-amino-acid chain; its full sequence is Heat-inducible transcription repressor HrcA (337 aa).

This sequence belongs to the HrcA family.

Negative regulator of class I heat shock genes (grpE-dnaK-dnaJ and groELS operons). Prevents heat-shock induction of these operons. The sequence is that of Heat-inducible transcription repressor HrcA from Arthrobacter sp. (strain FB24).